Consider the following 36-residue polypeptide: Turgencin-A (36 aa).

Disulfide bonds link Cys8/Cys33, Cys12/Cys29, and Cys17/Cys26. Met10 carries the post-translational modification Methionine sulfoxide. A Valine amide modification is found at Val36.

The protein resides in the secreted. Functionally, has antimicrobial activity against Gram-positive bacteria (C.glutamicum ATCC 13032 (MIC=0.4 uM), B.subtilis ATCC 23857 (MIC=0.4 uM) and S.aureus ATCC 9144 (MIC=6.3 uM)) and Gram-negative bacteria (E.coli ATCC 25922 (MIC=0.8 uM) and P.aeruginosa ATCC 27853 (MIC=1.6 uM)). This Synoicum turgens (Colonial ascidian) protein is Turgencin-A.